Here is a 147-residue protein sequence, read N- to C-terminus: Protein-export protein SecB (147 aa).

The protein belongs to the SecB family. In terms of assembly, homotetramer, a dimer of dimers. One homotetramer interacts with 1 SecA dimer.

The protein resides in the cytoplasm. Functionally, one of the proteins required for the normal export of preproteins out of the cell cytoplasm. It is a molecular chaperone that binds to a subset of precursor proteins, maintaining them in a translocation-competent state. It also specifically binds to its receptor SecA. This Neisseria gonorrhoeae (strain ATCC 700825 / FA 1090) protein is Protein-export protein SecB.